We begin with the raw amino-acid sequence, 126 residues long: FSYLPPLTDEQISKQVDYILANSWTPCLEFAASDQAYAGNDNCIRMGPVASTYQDNRYWTMWKLPMFGCTDGSQVLSEIQACTKAFPDAYIRLVCFDANRQVQISGFLVHRPPSATDYRLPADRQV.

This sequence belongs to the RuBisCO small chain family. Heterohexadecamer of 8 large and 8 small subunits.

The protein resides in the plastid. The protein localises to the chloroplast. RuBisCO catalyzes two reactions: the carboxylation of D-ribulose 1,5-bisphosphate, the primary event in carbon dioxide fixation, as well as the oxidative fragmentation of the pentose substrate. Both reactions occur simultaneously and in competition at the same active site. Although the small subunit is not catalytic it is essential for maximal activity. The protein is Ribulose bisphosphate carboxylase small subunit, chloroplastic 1 of Acetabularia peniculus (Green alga).